Here is a 143-residue protein sequence, read N- to C-terminus: Submaxillary gland androgen-regulated protein 2, isoform delta (143 aa).

An N-terminal signal peptide occupies residues 1-22 (MKPLCLVFGLCVLIGCFLSSEC). Disordered stretches follow at residues 28-52 (GQHD…PDPN) and 116-143 (VPRK…TDSF). 2 stretches are compositionally biased toward polar residues: residues 36-45 (LSPSNPSSHF) and 122-143 (NATP…TDSF).

The protein localises to the secreted. May play a role in protection or detoxification. In Mus musculus (Mouse), this protein is Submaxillary gland androgen-regulated protein 2, isoform delta (Smr2).